The following is a 185-amino-acid chain: Ribosome-recycling factor (185 aa).

It belongs to the RRF family.

The protein resides in the cytoplasm. In terms of biological role, responsible for the release of ribosomes from messenger RNA at the termination of protein biosynthesis. May increase the efficiency of translation by recycling ribosomes from one round of translation to another. This is Ribosome-recycling factor from Trichlorobacter lovleyi (strain ATCC BAA-1151 / DSM 17278 / SZ) (Geobacter lovleyi).